The primary structure comprises 101 residues: Urease subunit beta (101 aa).

It belongs to the urease beta subunit family. In terms of assembly, heterotrimer of UreA (gamma), UreB (beta) and UreC (alpha) subunits. Three heterotrimers associate to form the active enzyme.

It localises to the cytoplasm. The catalysed reaction is urea + 2 H2O + H(+) = hydrogencarbonate + 2 NH4(+). It participates in nitrogen metabolism; urea degradation; CO(2) and NH(3) from urea (urease route): step 1/1. The chain is Urease subunit beta from Paraburkholderia phymatum (strain DSM 17167 / CIP 108236 / LMG 21445 / STM815) (Burkholderia phymatum).